We begin with the raw amino-acid sequence, 629 residues long: tRNA uridine 5-carboxymethylaminomethyl modification enzyme MnmG (629 aa).

Residues 14–19 (GAGHAG), Val-126, and Ser-181 each bind FAD. Residue 273–287 (GPRYCPSIEDKVVRF) participates in NAD(+) binding. Gln-370 contributes to the FAD binding site.

The protein belongs to the MnmG family. As to quaternary structure, homodimer. Heterotetramer of two MnmE and two MnmG subunits. FAD is required as a cofactor.

The protein resides in the cytoplasm. Functionally, NAD-binding protein involved in the addition of a carboxymethylaminomethyl (cmnm) group at the wobble position (U34) of certain tRNAs, forming tRNA-cmnm(5)s(2)U34. The protein is tRNA uridine 5-carboxymethylaminomethyl modification enzyme MnmG of Bacillus cereus (strain ATCC 10987 / NRS 248).